The primary structure comprises 682 residues: DNA-directed RNA polymerase subunit beta' (682 aa).

Zn(2+) contacts are provided by C69, C71, C87, and C90. Mg(2+) contacts are provided by D491, D493, and D495.

The protein belongs to the RNA polymerase beta' chain family. RpoC1 subfamily. In plastids the minimal PEP RNA polymerase catalytic core is composed of four subunits: alpha, beta, beta', and beta''. When a (nuclear-encoded) sigma factor is associated with the core the holoenzyme is formed, which can initiate transcription. It depends on Mg(2+) as a cofactor. Zn(2+) serves as cofactor.

It localises to the plastid. The protein resides in the chloroplast. The catalysed reaction is RNA(n) + a ribonucleoside 5'-triphosphate = RNA(n+1) + diphosphate. Functionally, DNA-dependent RNA polymerase catalyzes the transcription of DNA into RNA using the four ribonucleoside triphosphates as substrates. The sequence is that of DNA-directed RNA polymerase subunit beta' from Lotus japonicus (Lotus corniculatus var. japonicus).